The sequence spans 420 residues: Phosphoglycerate kinase (420 aa).

(2R)-3-phosphoglycerate-binding residues include V24, D25, F26, N27, R40, S63, H64, G66, R67, L122, R123, H170, and R171. An ADP-binding site is contributed by G214. Residue G214 participates in CDP binding. AMP contacts are provided by A215 and K216. Residue A215 coordinates ATP. A Mg(2+)-binding site is contributed by A215. D219 contributes to the CDP binding site. A Mg(2+)-binding site is contributed by D219. Residue K220 coordinates AMP. K220 is an ATP binding site. G238 serves as a coordination point for ADP. CDP is bound at residue G238. The AMP site is built by G239 and G313. 2 residues coordinate ATP: G239 and G313. Residues G338 and F343 each coordinate CDP. F343 is a binding site for ADP. AMP is bound at residue E344. Residues E344, D375, and T376 each contribute to the ATP site. D375 provides a ligand contact to Mg(2+).

Belongs to the phosphoglycerate kinase family. In terms of assembly, monomer. Mg(2+) serves as cofactor.

The catalysed reaction is (2R)-3-phosphoglycerate + ATP = (2R)-3-phospho-glyceroyl phosphate + ADP. It participates in carbohydrate degradation; glycolysis; pyruvate from D-glyceraldehyde 3-phosphate: step 2/5. The sequence is that of Phosphoglycerate kinase (PGK) from Tetrahymena thermophila.